Reading from the N-terminus, the 120-residue chain is NAD(P)H-quinone oxidoreductase subunit 3 (120 aa).

Transmembrane regions (helical) follow at residues 6-26 (GYDA…LALV), 64-84 (MFAL…PWAV), and 89-109 (LGLL…VALA).

It belongs to the complex I subunit 3 family. In terms of assembly, NDH-1 can be composed of about 15 different subunits; different subcomplexes with different compositions have been identified which probably have different functions.

The protein localises to the cellular thylakoid membrane. The enzyme catalyses a plastoquinone + NADH + (n+1) H(+)(in) = a plastoquinol + NAD(+) + n H(+)(out). The catalysed reaction is a plastoquinone + NADPH + (n+1) H(+)(in) = a plastoquinol + NADP(+) + n H(+)(out). In terms of biological role, NDH-1 shuttles electrons from an unknown electron donor, via FMN and iron-sulfur (Fe-S) centers, to quinones in the respiratory and/or the photosynthetic chain. The immediate electron acceptor for the enzyme in this species is believed to be plastoquinone. Couples the redox reaction to proton translocation, and thus conserves the redox energy in a proton gradient. Cyanobacterial NDH-1 also plays a role in inorganic carbon-concentration. This is NAD(P)H-quinone oxidoreductase subunit 3 from Synechococcus sp. (strain CC9605).